Consider the following 1551-residue polypeptide: Envelopment polyprotein (1551 aa).

The signal sequence occupies residues 1 to 17 (MSKRVLIIAVVVYLVFT). The Lumenal segment spans residues 18–546 (TQNQITGNHT…CRMSSRPTVA (529 aa)). Positions 24-66 (GNHTTINSSSPSTTEASSTPTVSRTPQTTTTSTAVSTTITATT) are disordered. 2 N-linked (GlcNAc...) asparagine; by host glycosylation sites follow: N25 and N30. Residues 31–66 (SSSPSTTEASSTPTVSRTPQTTTTSTAVSTTITATT) show a composition bias toward low complexity. N80, N142, and N413 each carry an N-linked (GlcNAc...) asparagine; by host glycan. A helical membrane pass occupies residues 547 to 567 (LLLGIWIGCGYILTCIFSFLL). Topologically, residues 568-675 (YHLILFFANC…ISVGIFLKRT (108 aa)) are cytoplasmic. Residues 676-696 (TWLVVLLVLLGLAISPVQGAP) traverse the membrane as a helical segment. Residues 697–704 (TEVSNVKQ) lie on the Lumenal side of the membrane. The helical transmembrane segment at 705–725 (DGDYSICYFIFGCLVTAALLL) threads the bilayer. Over 726-823 (KVKRTNSNGI…REKLFTTGLQ (98 aa)) the chain is Cytoplasmic. A helical membrane pass occupies residues 824 to 844 (LFINKTNVVVFALIMCFLLLL). The Lumenal segment spans residues 845-1451 (TGHNASAFDS…GDFFKHYIGS (607 aa)). Residues N848, N1201, N1258, and N1420 are each glycosylated (N-linked (GlcNAc...) asparagine; by host). C1023 and C1216 are oxidised to a cystine. The helical transmembrane segment at 1452–1472 (IAVGVLGTVLPFALLILFFIY) threads the bilayer. Residues 1473 to 1551 (GDKMLWPFKV…KKEKKLSEIA (79 aa)) lie on the Cytoplasmic side of the membrane.

This sequence belongs to the nairovirus envelope glycoprotein family. As to quaternary structure, heterodimer with glycoprotein C; in prefusion state. Heterodimer with glycoprotein N; in prefusion state. Homotrimeric; in postfusion state. Specific enzymatic cleavage by host MBTPS1/S1P/SKI-1 endopeptidase yield glycoprotein N. Specific enzymatic cleavages by host furin-like protease and MBTPS1/S1P endopeptidase yield GP38. In terms of processing, glycosylated.

The protein localises to the host endoplasmic reticulum membrane. It is found in the virion membrane. Its subcellular location is the host Golgi apparatus membrane. Glycoprotein N and glycoprotein C interact with each other and are present at the surface of the virion. Glycoprotein N probably locks the Gn-Gc complex in a prefusion state. Glycoprotein N and glycoprotein C are able to attach the virion to host cell receptors. This attachment induces virion internalization predominantly through clathrin-dependent endocytosis. Its function is as follows. Glycoprotein C and glycoprotein N interact with each other and are present at the surface of the virion. The spikes at the surface of the virion are formed by an N-terminal extension of glycoprotein C. Glycoprotein N and glycoprotein C are able to attach the virion to host cell receptors. This attachment induces virion internalization predominantly through clathrin-dependent endocytosis. Class II fusion protein that promotes fusion of viral membrane with host endosomal membrane after endocytosis of the virion. Exposure to potassium is necessary for the conformational change leading to fusion. This chain is Envelopment polyprotein (GP), found in Amblyomma variegatum (Tropical bont tick).